We begin with the raw amino-acid sequence, 50 residues long: uncharacterized protein (50 aa).

This is an uncharacterized protein from Saccharomyces cerevisiae (strain ATCC 204508 / S288c) (Baker's yeast).